Here is a 56-residue protein sequence, read N- to C-terminus: Large ribosomal subunit protein bL33A (56 aa).

Belongs to the bacterial ribosomal protein bL33 family.

This Cutibacterium acnes (strain DSM 16379 / KPA171202) (Propionibacterium acnes) protein is Large ribosomal subunit protein bL33A.